The sequence spans 181 residues: Thymidine kinase (181 aa).

13–20 lines the ATP pocket; that stretch reads GPMFSGKS. E85 acts as the Proton acceptor in catalysis. F115 contributes to the substrate binding site. Positions 140 and 143 each coordinate Zn(2+). 159–163 is a substrate binding site; that stretch reads IEIIG. Zn(2+) is bound by residues C172 and C175.

The protein belongs to the thymidine kinase family.

It carries out the reaction thymidine + ATP = dTMP + ADP + H(+). This Yaba monkey tumor virus (strain VR587) (YMTV) protein is Thymidine kinase (TK).